A 185-amino-acid polypeptide reads, in one-letter code: uncharacterized protein (185 aa).

A run of 2 helical transmembrane segments spans residues 1-19 (MLNIVLIIGLLAIFNTSSA) and 105-125 (AGFIAQCIIFLFVYTIVTMDV).

It is found in the membrane. This is an uncharacterized protein from Caenorhabditis elegans.